Reading from the N-terminus, the 229-residue chain is 5'-methylthioadenosine/S-adenosylhomocysteine nucleosidase (229 aa).

Residue Glu12 is the Proton acceptor of the active site. Residues Gly78, Ile152, and 173 to 174 (ME) contribute to the substrate site. The Proton donor role is filled by Asp197.

The protein belongs to the PNP/UDP phosphorylase family. MtnN subfamily.

It catalyses the reaction S-adenosyl-L-homocysteine + H2O = S-(5-deoxy-D-ribos-5-yl)-L-homocysteine + adenine. The catalysed reaction is S-methyl-5'-thioadenosine + H2O = 5-(methylsulfanyl)-D-ribose + adenine. It carries out the reaction 5'-deoxyadenosine + H2O = 5-deoxy-D-ribose + adenine. The protein operates within amino-acid biosynthesis; L-methionine biosynthesis via salvage pathway; S-methyl-5-thio-alpha-D-ribose 1-phosphate from S-methyl-5'-thioadenosine (hydrolase route): step 1/2. In terms of biological role, catalyzes the irreversible cleavage of the glycosidic bond in both 5'-methylthioadenosine (MTA) and S-adenosylhomocysteine (SAH/AdoHcy) to adenine and the corresponding thioribose, 5'-methylthioribose and S-ribosylhomocysteine, respectively. Also cleaves 5'-deoxyadenosine, a toxic by-product of radical S-adenosylmethionine (SAM) enzymes, into 5-deoxyribose and adenine. The polypeptide is 5'-methylthioadenosine/S-adenosylhomocysteine nucleosidase (Histophilus somni (strain 129Pt) (Haemophilus somnus)).